Consider the following 194-residue polypeptide: 23 kDa U4/U6.U5 small nuclear ribonucleoprotein component (194 aa).

Residues 80–104 (FYCDICNLTFKDTLQYIDHLNHKVH) form a C2H2-type zinc finger.

In terms of assembly, component of the U4/U6-U5 tri-snRNP complex composed of the U4, U6 and U5 snRNAs and at least PRP3, PRP4, PRP6, PRP8, PRP18, PRP31, PRP38, SNU13, SNU23, SNU66, SNU114, SPP381, SMB1, SMD1, SMD2, SMD3, SMX2, SMX3, LSM2, LSM3, LSM4, LSM5, LSM6, LSM7, LSM8, BRR2 and DIB1.

It is found in the nucleus. Its function is as follows. Participates in pre-mRNA splicing. Part of the U4/U5/U6 tri-snRNP complex, one of the building blocks of the spliceosome. The chain is 23 kDa U4/U6.U5 small nuclear ribonucleoprotein component (SNU23) from Saccharomyces cerevisiae (strain ATCC 204508 / S288c) (Baker's yeast).